The sequence spans 927 residues: GPI inositol-deacylase (927 aa).

Over M1 to L4 the chain is Cytoplasmic. A helical membrane pass occupies residues S5 to F25. At S26–L595 the chain is on the lumenal side. Residues N75 and N155 are each glycosylated (N-linked (GlcNAc...) asparagine). Residue S169 is part of the active site. N230, N362, N397, N432, N444, and N482 each carry an N-linked (GlcNAc...) asparagine glycan. Residues P596–I616 form a helical membrane-spanning segment. Residues Q617–Y672 lie on the Cytoplasmic side of the membrane. A helical membrane pass occupies residues G673–W693. The Lumenal portion of the chain corresponds to S694 to T733. The chain crosses the membrane as a helical span at residues L734 to L754. The Cytoplasmic segment spans residues R755 to H821. Residues F822–W842 traverse the membrane as a helical segment. Residues L843–R858 lie on the Lumenal side of the membrane. Residues V859–I879 form a helical membrane-spanning segment. Topologically, residues K880–T887 are cytoplasmic. The chain crosses the membrane as a helical span at residues A888–Y908. Residues R909–V927 lie on the Lumenal side of the membrane.

This sequence belongs to the GPI inositol-deacylase family.

It is found in the endoplasmic reticulum membrane. In terms of biological role, GPI inositol-deacylase that catalyzes the remove of the acyl chain linked to the 2-OH position of inositol ring from the GPI-anchored protein (GPI-AP) in the endoplasmic reticulum. Initiates the post-attachment remodeling phase of GPI-AP biogenesis and participates in endoplasmic reticulum (ER)-to-Golgi transport of GPI-anchored protein. The polypeptide is GPI inositol-deacylase (Xenopus laevis (African clawed frog)).